Here is a 566-residue protein sequence, read N- to C-terminus: Chaperone Ric-8 (566 aa).

It belongs to the synembryn family. In terms of assembly, interacts with GDP-bound G(i)-alpha protein. Does not interact with G-alpha proteins when they are in complex with subunits beta and gamma. Interacts with Frq2 in a Ca(2+)-independent manner but does not interact with Frq1.

It localises to the cytoplasm. The protein localises to the cell cortex. The protein resides in the presynapse. Functionally, chaperone that specifically binds and folds some, but not all, nascent G alpha proteins prior to G protein heterotrimer formation, promoting their stability and activity. Also acts as a guanine nucleotide exchange factor (GEF) for G alpha proteins by stimulating exchange of bound GDP for free GTP. Plays a key role in asymmetric spindle positioning, a step for asymmetric cell division that generates cell diversity during development by activating G(i) alpha protein independently of G-protein coupled receptors. Required during gastrulation and sensory organ precursor (SOP) formation. Plays a role in positively regulating synapse number and neurotransmitter release. The polypeptide is Chaperone Ric-8 (ric8a) (Drosophila pseudoobscura pseudoobscura (Fruit fly)).